The following is a 188-amino-acid chain: COMM domain-containing protein 1 (188 aa).

The segment at 1 to 122 is sufficient for interaction with SLC12A2; that stretch reads MAGDLEGGKS…RWDNGLRGLS (122 aa). Histidine 100, methionine 109, and histidine 133 together coordinate Cu cation. The COMM domain maps to 117–185; sequence GLRGLSWRVD…EVEESINRLM (69 aa). Positions 124–188 are required for binding to PtdIns(4,5)P2; that stretch reads RVDGKSQSRH…ESINRLMQAA (65 aa).

This sequence belongs to the COMM domain-containing protein 1 family. Component of the commander complex consisting of the CCC subcomplex and the retriever subcomplex. Component of the CCC (COMMD/CCDC22/CCDC93) subcomplex consisting of COMMD1, COMMD2, COMMD3, COMMD4, COMMD5, COMMD6, COMMD7, COMMD8, COMMD9, COMMD10, CCDC22 and CCDC93; within the complex forms a heterodimer with COMMD6. Interacts with VPS35L; the interaction associates the CCC complex with the retriever complex. Identified in a complex with an E3 ubiquitin ligase complex composed of TCEB1/elongin C, CUL2, SOCS1 and RBX1; in the complex interacts directly with SOCS1 and CUL2. Identified in a complex with NF-kappa-B. Interacts directly with SLC12A2. Interacts directly with ATP7B (via the N-terminal region). Interacts with ATP7A. Interacts with FAM107A; this interaction stabilizes COMMD1 in the nucleus. Interacts with CCS, CDKN2A, RELA, REL, RELB, NFKB1/p105, NFKB2/p100, NFKBIB, SCNN1D, SCNN1B, CFTR, CLU, SGK1, AKT1, CUL1, CUL2, CUL3, CUL4A, CUL4B, CUL5, CUL7, HIF1A. Post-translationally, ubiquitinated; undergoes both 'Lys-63'- and 'Lys-48'-linked polyubiquitination. Ubiquitinated by XIAP, leading to its proteasomal degradation.

Its subcellular location is the nucleus. It is found in the cytoplasm. It localises to the endosome membrane. The protein localises to the cytoplasmic vesicle. The protein resides in the early endosome. Its subcellular location is the recycling endosome. In terms of biological role, scaffold protein in the commander complex that is essential for endosomal recycling of transmembrane cargos; the commander complex is composed of the CCC subcomplex and the retriever subcomplex. Can modulate activity of cullin-RING E3 ubiquitin ligase (CRL) complexes by displacing CAND1; in vitro promotes CRL E3 activity and dissociates CAND1 from CUL1 and CUL2. Promotes ubiquitination of NF-kappa-B subunit RELA and its subsequent proteasomal degradation. Down-regulates NF-kappa-B activity. Involved in the regulation of membrane expression and ubiquitination of SLC12A2. Modulates Na(+) transport in epithelial cells by regulation of apical cell surface expression of amiloride-sensitive sodium channel (ENaC) subunits and by promoting their ubiquitination presumably involving NEDD4L. Promotes the localization of SCNN1D to recycling endosomes. Promotes CFTR cell surface expression through regulation of its ubiquitination. Down-regulates SOD1 activity by interfering with its homodimerization. Plays a role in copper ion homeostasis. Involved in copper-dependent ATP7A trafficking between the trans-Golgi network and vesicles in the cell periphery; the function is proposed to depend on its association within the CCC complex and cooperation with the WASH complex on early endosomes. Can bind one copper ion per monomer. May function to facilitate biliary copper excretion within hepatocytes. Binds to phosphatidylinositol 4,5-bisphosphate (PtdIns(4,5)P2). Involved in the regulation of HIF1A-mediated transcription; competes with ARNT/Hif-1-beta for binding to HIF1A resulting in decreased DNA binding and impaired transcriptional activation by HIF-1. Negatively regulates neuroblastoma G1/S phase cell cycle progression and cell proliferation by stimulating ubiquitination of NF-kappa-B subunit RELA and NF-kappa-B degradation in a FAM107A- and actin-dependent manner. This chain is COMM domain-containing protein 1 (Commd1), found in Mus musculus (Mouse).